The sequence spans 89 residues: Small ribosomal subunit protein uS15 (89 aa).

The protein belongs to the universal ribosomal protein uS15 family. Part of the 30S ribosomal subunit. Forms a bridge to the 50S subunit in the 70S ribosome, contacting the 23S rRNA.

In terms of biological role, one of the primary rRNA binding proteins, it binds directly to 16S rRNA where it helps nucleate assembly of the platform of the 30S subunit by binding and bridging several RNA helices of the 16S rRNA. Forms an intersubunit bridge (bridge B4) with the 23S rRNA of the 50S subunit in the ribosome. The chain is Small ribosomal subunit protein uS15 from Oleidesulfovibrio alaskensis (strain ATCC BAA-1058 / DSM 17464 / G20) (Desulfovibrio alaskensis).